The sequence spans 1338 residues: Centrosomal P4.1-associated protein (1338 aa).

Residues 190–211 form a disordered region; that stretch reads GLSLLPDDQSQKHRSPGNTTTG. Phosphoserine is present on residues S260 and S316. Positions 319-394 are alpha/beta-tubulin binding; it reads VANIEERPIK…FTNAKSKFQK (76 aa). Disordered stretches follow at residues 386–414, 436–479, and 521–551; these read TNAKSKFQKGKESKLVTNQSTSEDQPLFK, PILK…QTGK, and QGKDRLPLSTGPASRLAAKSPIRETMKESES. Positions 400 to 409 are enriched in polar residues; sequence LVTNQSTSED. At S540 the chain carries Phosphoserine. The span at 541 to 550 shows a compositional bias: basic and acidic residues; it reads PIRETMKESE. S589 bears the Phosphoserine; by PLK2 mark. S595 carries the phosphoserine; by PLK2 and PLK4 modification. Disordered stretches follow at residues 611–789, 845–865, and 1096–1153; these read HRMS…LSLS, VKRGEDLSKSRRSRSPPTSEL, and YLPM…QGEI. Over residues 635-650 the composition is skewed to basic and acidic residues; the sequence is NRSEDLDHTAREKESE. A compositionally biased stretch (polar residues) spans 679-689; the sequence is QKSTSENQTEW. Over residues 717 to 764 the composition is skewed to basic and acidic residues; sequence STEDRERGISSREDSPQVCDDKGPFKDTRTQEDKRRDVDLDLSDKDYS. Residue S759 is modified to Phosphoserine. The interval 895–1338 is interaction with STIL; that stretch reads QPPGDNARSQ…EGNVLMDTEL (444 aa). The span at 1140 to 1149 shows a compositional bias: acidic residues; that stretch reads YKEEEEDQDI.

This sequence belongs to the TCP10 family. As to quaternary structure, forms homodimers. Associates with microtubules plus ends; binds to beta-tubulin subunits exposed on microtubule outer surface at its distal tip; also associates with microtubule lattice. Associated with the gamma-tubulin complex. Interacts with the head domain of EPB41. Interacts with LYST. Interacts with CEP152 (via C-terminus). Interacts with STIL. Forms a complex with STIL and SASS6. In terms of processing, phosphorylation at Ser-589 and Ser-595 by PLK2 is required for procentriole formation and centriole elongation. Phosphorylation by PLK2 oscillates during the cell cycle: it increases at G1/S transition and decreases during the exit from mitosis. Phosphorylation at Ser-595 is also mediated by PLK4 but is not a critical step in PLK4 function in procentriole assembly.

The protein resides in the cytoplasm. Its subcellular location is the cytoskeleton. It localises to the microtubule organizing center. The protein localises to the centrosome. It is found in the centriole. In terms of biological role, plays an important role in cell division and centrosome function by participating in centriole duplication. Inhibits microtubule nucleation from the centrosome. Involved in the regulation of slow processive growth of centriolar microtubules. Acts as a microtubule plus-end tracking protein that stabilizes centriolar microtubules and inhibits microtubule polymerization and extension from the distal ends of centrioles. Required for centriole elongation and for STIL-mediated centriole amplification. Required for the recruitment of CEP295 to the proximal end of new-born centrioles at the centriolar microtubule wall during early S phase in a PLK4-dependent manner. May be involved in the control of centriolar-microtubule growth by acting as a regulator of tubulin release. The protein is Centrosomal P4.1-associated protein of Homo sapiens (Human).